A 348-amino-acid polypeptide reads, in one-letter code: S-adenosylmethionine:tRNA ribosyltransferase-isomerase (348 aa).

Belongs to the QueA family. In terms of assembly, monomer.

It is found in the cytoplasm. The catalysed reaction is 7-aminomethyl-7-carbaguanosine(34) in tRNA + S-adenosyl-L-methionine = epoxyqueuosine(34) in tRNA + adenine + L-methionine + 2 H(+). Its pathway is tRNA modification; tRNA-queuosine biosynthesis. Its function is as follows. Transfers and isomerizes the ribose moiety from AdoMet to the 7-aminomethyl group of 7-deazaguanine (preQ1-tRNA) to give epoxyqueuosine (oQ-tRNA). The protein is S-adenosylmethionine:tRNA ribosyltransferase-isomerase of Tolumonas auensis (strain DSM 9187 / NBRC 110442 / TA 4).